Consider the following 738-residue polypeptide: 1,4-alpha-glucan branching enzyme GlgB (738 aa).

Catalysis depends on Asp-399, which acts as the Nucleophile. Glu-452 functions as the Proton donor in the catalytic mechanism.

Belongs to the glycosyl hydrolase 13 family. GlgB subfamily. As to quaternary structure, monomer.

The enzyme catalyses Transfers a segment of a (1-&gt;4)-alpha-D-glucan chain to a primary hydroxy group in a similar glucan chain.. It participates in glycan biosynthesis; glycogen biosynthesis. Its function is as follows. Catalyzes the formation of the alpha-1,6-glucosidic linkages in glycogen by scission of a 1,4-alpha-linked oligosaccharide from growing alpha-1,4-glucan chains and the subsequent attachment of the oligosaccharide to the alpha-1,6 position. The protein is 1,4-alpha-glucan branching enzyme GlgB of Chlamydia trachomatis serovar L2 (strain ATCC VR-902B / DSM 19102 / 434/Bu).